Consider the following 232-residue polypeptide: tRNA1(Val) (adenine(37)-N6)-methyltransferase (232 aa).

The protein belongs to the methyltransferase superfamily. tRNA (adenine-N(6)-)-methyltransferase family.

The protein localises to the cytoplasm. The enzyme catalyses adenosine(37) in tRNA1(Val) + S-adenosyl-L-methionine = N(6)-methyladenosine(37) in tRNA1(Val) + S-adenosyl-L-homocysteine + H(+). Functionally, specifically methylates the adenine in position 37 of tRNA(1)(Val) (anticodon cmo5UAC). This Pseudoalteromonas translucida (strain TAC 125) protein is tRNA1(Val) (adenine(37)-N6)-methyltransferase.